Here is a 757-residue protein sequence, read N- to C-terminus: Protein Lines homolog 1 (757 aa).

Ser635 is subject to Phosphoserine.

It belongs to the protein lines family. As to expression, expressed in adult testis, prostate, prostate, spleen, thymus, skeletal muscle, fetal kidney and brain.

The chain is Protein Lines homolog 1 from Homo sapiens (Human).